The chain runs to 88 residues: UPF0297 protein GTNG_2488 (88 aa).

This sequence belongs to the UPF0297 family.

The sequence is that of UPF0297 protein GTNG_2488 from Geobacillus thermodenitrificans (strain NG80-2).